Consider the following 232-residue polypeptide: Enolase-phosphatase E1 (232 aa).

This sequence belongs to the HAD-like hydrolase superfamily. MasA/MtnC family. In terms of assembly, monomer. The cofactor is Mg(2+).

The enzyme catalyses 5-methylsulfanyl-2,3-dioxopentyl phosphate + H2O = 1,2-dihydroxy-5-(methylsulfanyl)pent-1-en-3-one + phosphate. The protein operates within amino-acid biosynthesis; L-methionine biosynthesis via salvage pathway; L-methionine from S-methyl-5-thio-alpha-D-ribose 1-phosphate: step 3/6. It participates in amino-acid biosynthesis; L-methionine biosynthesis via salvage pathway; L-methionine from S-methyl-5-thio-alpha-D-ribose 1-phosphate: step 4/6. Bifunctional enzyme that catalyzes the enolization of 2,3-diketo-5-methylthiopentyl-1-phosphate (DK-MTP-1-P) into the intermediate 2-hydroxy-3-keto-5-methylthiopentenyl-1-phosphate (HK-MTPenyl-1-P), which is then dephosphorylated to form the acireductone 1,2-dihydroxy-3-keto-5-methylthiopentene (DHK-MTPene). The polypeptide is Enolase-phosphatase E1 (Nocardia farcinica (strain IFM 10152)).